Reading from the N-terminus, the 222-residue chain is Guanylate kinase (222 aa).

Residues 19–197 (GFLFILSSPS…SVSLIKSIYL (179 aa)) enclose the Guanylate kinase-like domain. 26-33 (SPSGAGKS) is an ATP binding site.

Belongs to the guanylate kinase family.

Its subcellular location is the cytoplasm. It catalyses the reaction GMP + ATP = GDP + ADP. Essential for recycling GMP and indirectly, cGMP. The protein is Guanylate kinase of Bartonella henselae (strain ATCC 49882 / DSM 28221 / CCUG 30454 / Houston 1) (Rochalimaea henselae).